Consider the following 93-residue polypeptide: UPF0728 protein C10orf53 homolog (93 aa).

The protein belongs to the UPF0728 family.

This is UPF0728 protein C10orf53 homolog from Mus musculus (Mouse).